The primary structure comprises 143 residues: Flagellar assembly factor FliW (143 aa).

The protein belongs to the FliW family. In terms of assembly, interacts with translational regulator CsrA and flagellin(s).

It is found in the cytoplasm. Acts as an anti-CsrA protein, binds CsrA and prevents it from repressing translation of its target genes, one of which is flagellin. Binds to flagellin and participates in the assembly of the flagellum. The polypeptide is Flagellar assembly factor FliW (Clostridium botulinum (strain 657 / Type Ba4)).